The primary structure comprises 171 residues: MYAVIKTGGKQYRVQAGDLLVVEKLEGEPGAAVAFGEVLMLGEGEAVTVGAPTVDGAVVSGTLLETRKGEKVKIFKKIRRQGYRRTRGHRQFESVVRVTSVAGAGKEAKWEGTIDLTPKVILDARARGLGDAAVPATIPAPVEAAPAKAEAAPKKKAAPKKAAAKTEEGEA.

Residues 144-171 (AAPAKAEAAPKKKAAPKKAAAKTEEGEA) are disordered. Over residues 154–163 (KKKAAPKKAA) the composition is skewed to basic residues.

Belongs to the bacterial ribosomal protein bL21 family. In terms of assembly, part of the 50S ribosomal subunit. Contacts protein L20.

In terms of biological role, this protein binds to 23S rRNA in the presence of protein L20. The sequence is that of Large ribosomal subunit protein bL21 from Caulobacter vibrioides (strain ATCC 19089 / CIP 103742 / CB 15) (Caulobacter crescentus).